A 299-amino-acid polypeptide reads, in one-letter code: Regucalcin (299 aa).

Residue Glu18 coordinates a divalent metal cation. The substrate site is built by Arg101, Asn103, and Glu121. The a divalent metal cation site is built by Asn154 and Asp204. Asp204 serves as the catalytic Proton donor/acceptor. N6-succinyllysine is present on residues Lys244 and Lys253.

The protein belongs to the SMP-30/CGR1 family. As to quaternary structure, monomer. Zn(2+) is required as a cofactor. Mn(2+) serves as cofactor. It depends on Ca(2+) as a cofactor. Requires Mg(2+) as cofactor.

It is found in the cytoplasm. The catalysed reaction is D-glucono-1,5-lactone + H2O = D-gluconate + H(+). It functions in the pathway cofactor biosynthesis; L-ascorbate biosynthesis via UDP-alpha-D-glucuronate pathway; L-ascorbate from UDP-alpha-D-glucuronate: step 3/4. Its function is as follows. Gluconolactonase with low activity towards other sugar lactones, including gulonolactone and galactonolactone. Catalyzes a key step in ascorbic acid (vitamin C) biosynthesis. Can also hydrolyze diisopropyl phosphorofluoridate and phenylacetate (in vitro). Calcium-binding protein. Modulates Ca(2+) signaling, and Ca(2+)-dependent cellular processes and enzyme activities. This Sus scrofa (Pig) protein is Regucalcin (RGN).